The following is a 69-amino-acid chain: Cold shock-like protein CspE (69 aa).

Positions 6-66 (GNVKWFNESK…GAKGPSAANV (61 aa)) constitute a CSD domain.

Its subcellular location is the cytoplasm. The sequence is that of Cold shock-like protein CspE (cspE) from Escherichia coli O6:H1 (strain CFT073 / ATCC 700928 / UPEC).